The primary structure comprises 451 residues: Proton-coupled amino acid transporter-like protein acs (451 aa).

Over 1-48 (MNDDIKTVTVYPTTLELTTPTKSANGSNDDYDPHQHRELKNPTTNFQT) the chain is Cytoplasmic. A helical transmembrane segment spans residues 49–69 (FAHFLKASVGTGVLAMPSAFA). The Extracellular portion of the chain corresponds to 70 to 80 (HAGYVNGTLLT). Residue Asn75 is glycosylated (N-linked (GlcNAc...) asparagine). Residues 81 to 101 (LIIGSLALYCLHILIKCMYIL) form a helical membrane-spanning segment. The Cytoplasmic segment spans residues 102-136 (CKRQRVPYVSFSQAMNLGLKQGPPWLRCLAPIAVP). A helical transmembrane segment spans residues 137–157 (FVDGFLAFYHFGICCVYVVFI). Over 158–167 (AESIKQLVDE) the chain is Extracellular. Residues 168-188 (YLVVWDVRIHMCIIIVPLLLI) form a helical membrane-spanning segment. At 189–199 (YSIKNLKLLAP) the chain is on the cytoplasmic side. A helical membrane pass occupies residues 200–220 (FSSAANLLLLVGFGIILYYIF). At 221-237 (EELPPLSERDPFVAAGK) the chain is on the extracellular side. A helical membrane pass occupies residues 238 to 258 (LPTFFGTVLFALEAVGVILAI). The Cytoplasmic segment spans residues 259–272 (EENMATPKSFVGPC). A helical membrane pass occupies residues 273–293 (GILNSGMSIVLGLYVLLGFFG). The Extracellular segment spans residues 294–320 (YWKYGNESEGSITLNIPQSEIPAQVVK). Asn299 carries an N-linked (GlcNAc...) asparagine glycan. A helical membrane pass occupies residues 321 to 341 (VFFAITTWISYALQGYVTAHI). The Cytoplasmic portion of the chain corresponds to 342 to 357 (LWDKYLAKRFKETRQT). Residues 358-378 (FYELIFRAIIVLLTFGCAVAI) traverse the membrane as a helical segment. The Extracellular segment spans residues 379–382 (PDLS). The chain crosses the membrane as a helical span at residues 383-403 (VFLSLVGSFCLSILGLIFPVL). The Cytoplasmic portion of the chain corresponds to 404–420 (LQICVQYTEGYGPFRIK). The chain crosses the membrane as a helical span at residues 421–441 (LIINLLLLCFGIFGGVVGTYV). Residues 442–451 (SILDIIAVYK) are Extracellular-facing.

Belongs to the amino acid/polyamine transporter 2 family. In terms of tissue distribution, expressed in the proximal and distal regions of the midgut; expressed in enterocytes and progenitor cells. Expression increases in response to intestinal bacterial infection and spreads further into the midgut, eventually covering the entire midgut.

The protein localises to the cell membrane. It is found in the late endosome membrane. The protein resides in the lysosome membrane. It localises to the basal cell membrane. Amino acid transporter which has pH-dependent electrogenic transport activity for alanine, glycine and proline. Plays a role in positive regulation of growth by directly or indirectly modulating the effects of the TOR signaling pathway. Required in enterocytes for the efficient recovery of gut epithelium following the cytoplasmic purge response to bacterial infection. Acts cell-autonomously to promote the retrograde transport of amino acids into the intestinal epithelium. Acts non-cell-autonomously through the insulin signaling pathway to stimulate Myc expression and the release of amino acids from nutrient stores into the hemolymph. The sequence is that of Proton-coupled amino acid transporter-like protein acs from Drosophila melanogaster (Fruit fly).